Here is a 547-residue protein sequence, read N- to C-terminus: Alpha-1,3-mannosyl-glycoprotein 4-beta-N-acetylglucosaminyltransferase B (547 aa).

The Cytoplasmic portion of the chain corresponds to 1 to 7 (MRLRNGT). Residues 8–28 (FLTVLLFGLCGLISLSWYTAF) form a helical; Signal-anchor for type II membrane protein membrane-spanning segment. Topologically, residues 29–547 (SNSKGNVVDI…LSEIFIKKAE (519 aa)) are lumenal. The stretch at 36-83 (VDIYQREFLALRDRLHSAEQENLKRSKELNLVLDEIKRAIAEKQALRD) forms a coiled coil. 3 N-linked (GlcNAc...) asparagine glycosylation sites follow: asparagine 85, asparagine 101, and asparagine 464.

It belongs to the glycosyltransferase 54 family. Requires a divalent metal cation as cofactor. Post-translationally, N-glycosylated.

It localises to the golgi apparatus membrane. It carries out the reaction N(4)-{beta-D-GlcNAc-(1-&gt;2)-alpha-D-Man-(1-&gt;3)-[beta-D-GlcNAc-(1-&gt;2)-alpha-D-Man-(1-&gt;6)]-beta-D-Man-(1-&gt;4)-beta-D-GlcNAc-(1-&gt;4)-beta-D-GlcNAc}-L-asparaginyl-[protein] + UDP-N-acetyl-alpha-D-glucosamine = N(4)-{beta-D-GlcNAc-(1-&gt;2)-[beta-D-GlcNAc-(1-&gt;4)]-alpha-D-Man-(1-&gt;3)-[beta-D-GlcNAc-(1-&gt;2)-alpha-D-Man-(1-&gt;6)]-beta-D-Man-(1-&gt;4)-beta-D-GlcNAc-(1-&gt;4)-beta-D-GlcNAc}-L-asparaginyl-[protein] + UDP + H(+). The enzyme catalyses an N(4)-{beta-D-GlcNAc-(1-&gt;2)-alpha-D-Man-(1-&gt;3)-[alpha-D-Man-(1-&gt;6)]-beta-D-Man-(1-&gt;4)-beta-D-GlcNAc-(1-&gt;4)-beta-D-GlcNAc}-L-asparaginyl-[protein] + UDP-N-acetyl-alpha-D-glucosamine = an N(4)-{beta-D-GlcNAc-(1-&gt;2)-[beta-D-GlcNAc-(1-&gt;4)]-alpha-D-Man-(1-&gt;3)-[alpha-D-Man-(1-&gt;6)]-beta-D-Man-(1-&gt;4)-beta-D-GlcNAc-(1-&gt;4)-beta-D-GlcNAc}-L-asparaginyl-[protein] + UDP + H(+). It catalyses the reaction an N(4)-{beta-D-GlcNAc-(1-&gt;2)-alpha-D-Man-(1-&gt;3)-[beta-D-GlcNAc-(1-&gt;2)-[beta-D-GlcNAc-(1-&gt;6)]-alpha-D-Man-(1-&gt;6)]-beta-D-Man-(1-&gt;4)-beta-D-GlcNAc-(1-&gt;4)-beta-D-GlcNAc}-L-asparaginyl-[protein] + UDP-N-acetyl-alpha-D-glucosamine = an N(4)-{beta-D-GlcNAc-(1-&gt;2)-[beta-D-GlcNAc-(1-&gt;4)]-alpha-D-Man-(1-&gt;3)-[beta-D-GlcNAc-(1-&gt;2)-[beta-D-GlcNAc-(1-&gt;6)]-alpha-D-Man-(1-&gt;6)]-beta-D-Man-(1-&gt;4)-beta-D-GlcNAc-(1-&gt;4)-beta-D-GlcNAc}-L-asparaginyl-[protein] + UDP + H(+). The catalysed reaction is an N(4)-{beta-D-GlcNAc-(1-&gt;2)-alpha-D-Man-(1-&gt;3)-[beta-D-GlcNAc-(1-&gt;2)-alpha-D-Man-(1-&gt;6)]-beta-D-Man-(1-&gt;4)-beta-D-GlcNAc-(1-&gt;4)-[alpha-L-Fuc-(1-&gt;6)]-beta-D-GlcNAc}-L-asparaginyl-[protein] + UDP-N-acetyl-alpha-D-glucosamine = N(4)-{beta-D-GlcNAc-(1-&gt;2)-[beta-D-GlcNAc-(1-&gt;4)]-alpha-D-Man-(1-&gt;3)-[beta-D-GlcNAc-(1-&gt;2)-alpha-D-Man-(1-&gt;6)]-beta-D-Man-(1-&gt;4)-beta-D-GlcNAc-(1-&gt;4)-[alpha-L-Fuc-(1-&gt;6)]-beta-D-GlcNAc}-asparaginyl-[protein] + UDP + H(+). It carries out the reaction an N(4)-{beta-D-GlcNAc-(1-&gt;2)-alpha-D-Man-(1-&gt;3)-[beta-D-Gal-(1-&gt;4)-beta-D-GlcNAc-(1-&gt;2)-alpha-D-Man-(1-&gt;6)]-beta-D-Man-(1-&gt;4)-beta-D-GlcNAc-(1-&gt;4)-beta-D-GlcNAc}-L-asparaginyl-[protein] + UDP-N-acetyl-alpha-D-glucosamine = an N(4)-{beta-D-GlcNAc-(1-&gt;2)-[beta-D-GlcNAc-(1-&gt;4)]-alpha-D-Man-(1-&gt;3)-[beta-D-Gal-(1-&gt;4)-beta-D-GlcNAc-(1-&gt;2)-alpha-D-Man-(1-&gt;6)]-beta-D-Man-(1-&gt;4)-beta-D-GlcNAc-(1-&gt;4)-beta-D-GlcNAc}-L-asparaginyl-[protein] + UDP + H(+). The enzyme catalyses N(4)-{beta-D-GlcNAc-(1-&gt;2)-alpha-D-Man-(1-&gt;3)-[alpha-D-Man-(1-&gt;3)-{alpha-D-Man-(1-&gt;6)}-alpha-D-Man-(1-&gt;6)]-beta-D-Man-(1-&gt;4)-beta-D-GlcNAc-(1-&gt;4)-beta-D-GlcNAc}-asparaginyl-[protein] + UDP-N-acetyl-alpha-D-glucosamine = N(4)-{beta-D-GlcNAc-(1-&gt;2)-[beta-D-GlcNAc-(1-&gt;4)]-alpha-D-Man-(1-&gt;3)-[alpha-D-Man-(1-&gt;3)-{alpha-D-Man-(1-&gt;6)}-alpha-D-Man-(1-&gt;6)]-beta-D-Man-(1-&gt;4)-beta-D-GlcNAc-(1-&gt;4)-beta-D-GlcNAc}-asparaginyl-[protein] + UDP + H(+). It catalyses the reaction N(4)-{beta-D-GlcNAc-(1-&gt;2)-alpha-D-Man-(1-&gt;3)-beta-D-Man-(1-&gt;4)-beta-D-GlcNAc-(1-&gt;4)-beta-D-GlcNAc}-asparaginyl-[protein] + UDP-N-acetyl-alpha-D-glucosamine = N(4)-{beta-D-GlcNAc-(1-&gt;2)-[beta-D-GlcNAc-(1-&gt;4)]-alpha-D-Man-(1-&gt;3)-beta-D-Man-(1-&gt;4)-beta-D-GlcNAc-(1-&gt;4)-beta-D-GlcNAc}-asparaginyl-[protein] + UDP + H(+). The protein operates within protein modification; protein glycosylation. In terms of biological role, glycosyltransferase that catalyze the transfer of GlcNAc from UDP-GlcNAc to the GlcNAcbeta1-2Manalpha1-3 arm of the core structure of N-linked glycans through a beta1-4 linkage and participates in the production of tri- and tetra-antennary N-linked sugar chains. Prefers complex-type N-glycans over hybrid-types. Has lower affinities for donors or acceptors than MGAT4A, suggesting that, under physiological conditions, it is not the main contributor in N-glycan biosynthesis. The sequence is that of Alpha-1,3-mannosyl-glycoprotein 4-beta-N-acetylglucosaminyltransferase B (mgat4bQ9UQ53) from Danio rerio (Zebrafish).